We begin with the raw amino-acid sequence, 1215 residues long: DNA-directed RNA polymerase subunit beta' (1215 aa).

Cys-60, Cys-62, Cys-75, and Cys-78 together coordinate Zn(2+). Residues Asp-450, Asp-452, and Asp-454 each coordinate Mg(2+). 4 residues coordinate Zn(2+): Cys-819, Cys-893, Cys-900, and Cys-903.

The protein belongs to the RNA polymerase beta' chain family. The RNAP catalytic core consists of 2 alpha, 1 beta, 1 beta' and 1 omega subunit. When a sigma factor is associated with the core the holoenzyme is formed, which can initiate transcription. Mg(2+) is required as a cofactor. Requires Zn(2+) as cofactor.

The catalysed reaction is RNA(n) + a ribonucleoside 5'-triphosphate = RNA(n+1) + diphosphate. Functionally, DNA-dependent RNA polymerase catalyzes the transcription of DNA into RNA using the four ribonucleoside triphosphates as substrates. In Levilactobacillus brevis (strain ATCC 367 / BCRC 12310 / CIP 105137 / JCM 1170 / LMG 11437 / NCIMB 947 / NCTC 947) (Lactobacillus brevis), this protein is DNA-directed RNA polymerase subunit beta'.